We begin with the raw amino-acid sequence, 710 residues long: Polyribonucleotide nucleotidyltransferase (710 aa).

2 residues coordinate Mg(2+): D486 and D492. One can recognise a KH domain in the interval 553-612 (PRFETIKIHPDKIRDIIGKGGATIRSITEETNSSIDIDDDGTVKVYADDNEALQAALNRI). The 69-residue stretch at 622–690 (GAIYEGTVVR…QRGRIKLSIK (69 aa)) folds into the S1 motif domain.

This sequence belongs to the polyribonucleotide nucleotidyltransferase family. Component of the RNA degradosome, which is a multiprotein complex involved in RNA processing and mRNA degradation. Mg(2+) is required as a cofactor.

It localises to the cytoplasm. The catalysed reaction is RNA(n+1) + phosphate = RNA(n) + a ribonucleoside 5'-diphosphate. Its function is as follows. Involved in mRNA degradation. Catalyzes the phosphorolysis of single-stranded polyribonucleotides processively in the 3'- to 5'-direction. The sequence is that of Polyribonucleotide nucleotidyltransferase from Cellvibrio japonicus (strain Ueda107) (Pseudomonas fluorescens subsp. cellulosa).